The primary structure comprises 256 residues: Thiazole synthase (256 aa).

The active-site Schiff-base intermediate with DXP is the lysine 95. Residues glycine 156, 182–183, and 204–205 contribute to the 1-deoxy-D-xylulose 5-phosphate site; these read AG and NT.

This sequence belongs to the ThiG family. In terms of assembly, homotetramer. Forms heterodimers with either ThiH or ThiS.

The protein resides in the cytoplasm. It catalyses the reaction [ThiS sulfur-carrier protein]-C-terminal-Gly-aminoethanethioate + 2-iminoacetate + 1-deoxy-D-xylulose 5-phosphate = [ThiS sulfur-carrier protein]-C-terminal Gly-Gly + 2-[(2R,5Z)-2-carboxy-4-methylthiazol-5(2H)-ylidene]ethyl phosphate + 2 H2O + H(+). The protein operates within cofactor biosynthesis; thiamine diphosphate biosynthesis. Its function is as follows. Catalyzes the rearrangement of 1-deoxy-D-xylulose 5-phosphate (DXP) to produce the thiazole phosphate moiety of thiamine. Sulfur is provided by the thiocarboxylate moiety of the carrier protein ThiS. In vitro, sulfur can be provided by H(2)S. The protein is Thiazole synthase of Escherichia coli (strain 55989 / EAEC).